We begin with the raw amino-acid sequence, 242 residues long: Protein HTATIP2 (242 aa).

A2 is subject to N-acetylalanine. Residues 2 to 25 are required for interaction with elongation factor EEF1A1; it reads ADKEALPKLREDFKMQNKSVFILG. NADPH is bound by residues S27, G28, E29, T30, R52, R53, L92, G93, Y143, K147, L170, and R178. Residue Y143 is the Proton acceptor of the active site. K147 is an active-site residue.

Monomer. Forms homodimers during oxidative stress. Interacts (via N-terminus) with elongation factor EEF1A1 (via middle-region); the interaction is direct and competes with EEF1A1 binding to guanyl-nucleotide exchange factor EEF1B2, thereby inhibiting GDP for GTP exchange and reactivation of EEF1A1. Interacts with nuclear transport receptors XPO4, IPO5/RANBP5, IPO7, IPO9 and KPNB1 as well as GCN1L1/GCN1 and LRPPRC probably through their HEAT repeats. Binds NCOA5/CIA.

The protein localises to the cytoplasm. Its function is as follows. Represses translation by preventing reactivation of elongation factor eEF1A. May also inhibit nuclear import by competing with nuclear import substrates for binding to a subset of nuclear transport receptors. Has additionally been proposed to act as a redox sensor involved in cellular oxidative stress surveillance. This Mus musculus (Mouse) protein is Protein HTATIP2.